Reading from the N-terminus, the 85-residue chain is Coiled-coil-helix-coiled-coil-helix domain-containing protein 7 (85 aa).

The region spanning 13 to 55 is the CHCH domain; it reads INPCLSESDASTRCMDENNYDRERCSSYFLKYKNCRRFWNSVM. 2 consecutive short sequence motifs (cx9C motif) follow at residues 16 to 26 and 37 to 47; these read CLSESDASTRC and CSSYFLKYKNC. 2 disulfide bridges follow: C16/C47 and C26/C37.

Belongs to the CHCHD7 family. Monomer.

It localises to the mitochondrion intermembrane space. This is Coiled-coil-helix-coiled-coil-helix domain-containing protein 7 (Chchd7) from Mus musculus (Mouse).